Consider the following 178-residue polypeptide: Nucleoside triphosphate/diphosphate phosphatase (178 aa).

Residue Arg-23 is the Proton donor of the active site. Mg(2+)-binding residues include Asn-87, Asp-103, Asp-105, Asp-107, Asp-120, and Glu-123.

It belongs to the Ntdp family. Mg(2+) serves as cofactor.

It carries out the reaction a ribonucleoside 5'-triphosphate + H2O = a ribonucleoside 5'-diphosphate + phosphate + H(+). The enzyme catalyses a ribonucleoside 5'-diphosphate + H2O = a ribonucleoside 5'-phosphate + phosphate + H(+). In terms of biological role, has nucleoside phosphatase activity towards nucleoside triphosphates and nucleoside diphosphates. The sequence is that of Nucleoside triphosphate/diphosphate phosphatase from Latilactobacillus sakei subsp. sakei (strain 23K) (Lactobacillus sakei subsp. sakei).